The primary structure comprises 72 residues: Small ribosomal subunit protein bS18 (72 aa).

It belongs to the bacterial ribosomal protein bS18 family. Part of the 30S ribosomal subunit. Forms a tight heterodimer with protein bS6.

Its function is as follows. Binds as a heterodimer with protein bS6 to the central domain of the 16S rRNA, where it helps stabilize the platform of the 30S subunit. In Aquifex aeolicus (strain VF5), this protein is Small ribosomal subunit protein bS18.